Consider the following 29-residue polypeptide: NADP phosphatase 1 (29 aa).

In terms of assembly, homodimer.

The protein resides in the cytoplasm. The protein is NADP phosphatase 1 of Arthrobacter sp. (strain KM).